A 238-amino-acid polypeptide reads, in one-letter code: MLALDKVRYEYEHEWFEFDLNVADGDIVALMGPSGAGKSTLLSLVAGFIEPVSGSIKVNDQSVLGLAPYQRPFSMLFQEHNLFAHLTVRENIGLGLHPGLKLNAEQKQQVVDAAQQVGIADYLDRLPEQLSGGQRQRVALARCFVQPNPIWLLDEPFSALDPLLREEMLALVKQLASERQRTVVMVTHHLSDARAIASQIAFLSQGKVKVVSDCQAVTAQHPHPELAQFVAAALNEPK.

In terms of domain architecture, ABC transporter spans Leu-2–Val-230. Position 32-39 (Gly-32–Ser-39) interacts with ATP.

This sequence belongs to the ABC transporter superfamily. Thiamine importer (TC 3.A.1.19.1) family. In terms of assembly, the complex is composed of two ATP-binding proteins (ThiQ), two transmembrane proteins (ThiP) and a solute-binding protein (ThiB).

It is found in the cell inner membrane. It catalyses the reaction thiamine(out) + ATP + H2O = thiamine(in) + ADP + phosphate + H(+). In terms of biological role, part of the ABC transporter complex ThiBPQ involved in thiamine import. Responsible for energy coupling to the transport system. This is Thiamine import ATP-binding protein ThiQ from Vibrio cholerae serotype O1 (strain ATCC 39315 / El Tor Inaba N16961).